Reading from the N-terminus, the 124-residue chain is Heat-labile enterotoxin B chain (124 aa).

Residues 1-21 (MNKVKCYVLFTALLSSLYAHG) form the signal peptide. Cysteines 30 and 107 form a disulfide.

In terms of assembly, heterohexamer of one A chain and of five B chains.

The biological activity of the toxin is produced by the A chain, which activates intracellular adenyl cyclase. The chain is Heat-labile enterotoxin B chain (eltB) from Escherichia coli.